The primary structure comprises 457 residues: Bifunctional protein GlmU (457 aa).

Residues 1–229 (MYNCAIILAA…YEEIMGVNSR (229 aa)) form a pyrophosphorylase region. UDP-N-acetyl-alpha-D-glucosamine-binding positions include 8 to 11 (LAAG), Lys22, Gln73, and 78 to 79 (GT). Asp103 is a binding site for Mg(2+). Residues Gly140, Glu155, Asn170, and Asn227 each coordinate UDP-N-acetyl-alpha-D-glucosamine. Asn227 contacts Mg(2+). Residues 230–250 (VQLSEAEIVMRKRINHKHMVN) are linker. An N-acetyltransferase region spans residues 251-457 (GVTFIDCEST…WLDKKGLLKK (207 aa)). Positions 332 and 350 each coordinate UDP-N-acetyl-alpha-D-glucosamine. Residue His362 is the Proton acceptor of the active site. Residues Tyr365 and Asn376 each contribute to the UDP-N-acetyl-alpha-D-glucosamine site. Acetyl-CoA contacts are provided by residues 385 to 386 (NY), Ala422, and Arg439.

In the N-terminal section; belongs to the N-acetylglucosamine-1-phosphate uridyltransferase family. It in the C-terminal section; belongs to the transferase hexapeptide repeat family. In terms of assembly, homotrimer. It depends on Mg(2+) as a cofactor.

It localises to the cytoplasm. The catalysed reaction is alpha-D-glucosamine 1-phosphate + acetyl-CoA = N-acetyl-alpha-D-glucosamine 1-phosphate + CoA + H(+). It catalyses the reaction N-acetyl-alpha-D-glucosamine 1-phosphate + UTP + H(+) = UDP-N-acetyl-alpha-D-glucosamine + diphosphate. The protein operates within nucleotide-sugar biosynthesis; UDP-N-acetyl-alpha-D-glucosamine biosynthesis; N-acetyl-alpha-D-glucosamine 1-phosphate from alpha-D-glucosamine 6-phosphate (route II): step 2/2. It participates in nucleotide-sugar biosynthesis; UDP-N-acetyl-alpha-D-glucosamine biosynthesis; UDP-N-acetyl-alpha-D-glucosamine from N-acetyl-alpha-D-glucosamine 1-phosphate: step 1/1. Its pathway is bacterial outer membrane biogenesis; LPS lipid A biosynthesis. Its function is as follows. Catalyzes the last two sequential reactions in the de novo biosynthetic pathway for UDP-N-acetylglucosamine (UDP-GlcNAc). The C-terminal domain catalyzes the transfer of acetyl group from acetyl coenzyme A to glucosamine-1-phosphate (GlcN-1-P) to produce N-acetylglucosamine-1-phosphate (GlcNAc-1-P), which is converted into UDP-GlcNAc by the transfer of uridine 5-monophosphate (from uridine 5-triphosphate), a reaction catalyzed by the N-terminal domain. The chain is Bifunctional protein GlmU from Clostridium botulinum (strain Kyoto / Type A2).